The following is a 307-amino-acid chain: Putative S-adenosyl-L-methionine-dependent methyltransferase Mflv_5023 (307 aa).

S-adenosyl-L-methionine contacts are provided by residues aspartate 133 and 162 to 163; that span reads DL. A disordered region spans residues 213–234; the sequence is SRLAVESVPSQQSADQDEMREK.

This sequence belongs to the UPF0677 family.

In terms of biological role, exhibits S-adenosyl-L-methionine-dependent methyltransferase activity. This Mycolicibacterium gilvum (strain PYR-GCK) (Mycobacterium gilvum (strain PYR-GCK)) protein is Putative S-adenosyl-L-methionine-dependent methyltransferase Mflv_5023.